The sequence spans 1297 residues: Phosphoribosylformylglycinamidine synthase (1297 aa).

Positions 301 to 329 (TAISPFPGAATGSGGEIRDEGATGRGAKP) are disordered. 308-319 (GAATGSGGEIRD) is a binding site for ATP. 4 residues coordinate Mg(2+): D680, E719, N723, and D887. S889 is a binding site for ATP. Residues 1045–1297 (IAILREQGVN…RLFRNARMVF (253 aa)) form the Glutamine amidotransferase type-1 domain. C1138 functions as the Nucleophile in the catalytic mechanism. Catalysis depends on residues H1263 and E1265.

This sequence in the N-terminal section; belongs to the FGAMS family. As to quaternary structure, monomer.

It is found in the cytoplasm. The catalysed reaction is N(2)-formyl-N(1)-(5-phospho-beta-D-ribosyl)glycinamide + L-glutamine + ATP + H2O = 2-formamido-N(1)-(5-O-phospho-beta-D-ribosyl)acetamidine + L-glutamate + ADP + phosphate + H(+). It participates in purine metabolism; IMP biosynthesis via de novo pathway; 5-amino-1-(5-phospho-D-ribosyl)imidazole from N(2)-formyl-N(1)-(5-phospho-D-ribosyl)glycinamide: step 1/2. Its function is as follows. Phosphoribosylformylglycinamidine synthase involved in the purines biosynthetic pathway. Catalyzes the ATP-dependent conversion of formylglycinamide ribonucleotide (FGAR) and glutamine to yield formylglycinamidine ribonucleotide (FGAM) and glutamate. The sequence is that of Phosphoribosylformylglycinamidine synthase from Haemophilus influenzae (strain ATCC 51907 / DSM 11121 / KW20 / Rd).